A 1128-amino-acid polypeptide reads, in one-letter code: Exportin-6 (1128 aa).

In terms of domain architecture, Importin N-terminal spans 31–97 (IEELLNSFAG…RSCLPKLLLS (67 aa)).

The protein belongs to the exportin family.

The protein localises to the nucleus. The protein resides in the cytoplasm. In terms of biological role, mediates the nuclear export of actin and profilin-actin complexes in somatic cells. This is Exportin-6 (xpo6) from Danio rerio (Zebrafish).